The following is a 210-amino-acid chain: MAKLRVSYEYTEAEDKSIRLGLFLIVSGILSLFIFGFCWLSPALQDLQATAANCTVLSVQQIGEVFECTFTCGTDCRGTSQYPCVQVYVNNSESNSRALLHSDQHQLLTNPKCSYIPPCKRENQKNSESVMNWQQYWKDEIGSQPFTCYFNQHQRPEDVLLQRTHDEIVLLHCFLWPVVAFVVGVLIVVLTICAKSLAVKAEAMKKRKFS.

Residues 1–19 (MAKLRVSYEYTEAEDKSIR) are Cytoplasmic-facing. Residues 20–40 (LGLFLIVSGILSLFIFGFCWL) traverse the membrane as a helical segment. Residues 41 to 167 (SPALQDLQAT…DVLLQRTHDE (127 aa)) are Extracellular-facing. N-linked (GlcNAc...) asparagine glycans are attached at residues asparagine 53 and asparagine 90. A helical transmembrane segment spans residues 168 to 188 (IVLLHCFLWPVVAFVVGVLIV). At 189 to 210 (VLTICAKSLAVKAEAMKKRKFS) the chain is on the cytoplasmic side.

Belongs to the KCNMB (TC 8.A.14.1) family. KCNMB4 subfamily. Interacts with KCNMA1 tetramer. There are probably 4 molecules of KCMNB4 per KCNMA1 tetramer. Interacts with FMR1 (via N-terminus). Phosphorylated. Phosphorylation modulates its effect on KCNMA1 activation kinetics. Post-translationally, N-glycosylated. A highly glycosylated form is promoted by KCNMA1. Glycosylation, which is not required for the interaction with KCNMA1 and subcellular location, increases protection against charybdotoxin.

The protein resides in the membrane. Its function is as follows. Regulatory subunit of the calcium activated potassium KCNMA1 (maxiK) channel. Modulates the calcium sensitivity and gating kinetics of KCNMA1, thereby contributing to KCNMA1 channel diversity. Decreases the gating kinetics and calcium sensitivity of the KCNMA1 channel, but with fast deactivation kinetics. May decrease KCNMA1 channel openings at low calcium concentrations but increases channel openings at high calcium concentrations. Makes KCNMA1 channel resistant to 100 nM charybdotoxin (CTX) toxin concentrations. In Rattus norvegicus (Rat), this protein is Calcium-activated potassium channel subunit beta-4 (Kcnmb4).